The following is a 103-amino-acid chain: Cell division protein FtsB (103 aa).

Residues 1-3 (MGK) lie on the Cytoplasmic side of the membrane. A helical membrane pass occupies residues 4–21 (LTLLLLALLVWLQYSLWF). Residues 22-103 (GKNGIHDYSR…RAGGPAQNNR (82 aa)) lie on the Periplasmic side of the membrane. A coiled-coil region spans residues 38-62 (VQQATNAKLKARNDQLFAEIDDLNG).

This sequence belongs to the FtsB family. As to quaternary structure, part of a complex composed of FtsB, FtsL and FtsQ.

It localises to the cell inner membrane. Functionally, essential cell division protein. May link together the upstream cell division proteins, which are predominantly cytoplasmic, with the downstream cell division proteins, which are predominantly periplasmic. This chain is Cell division protein FtsB, found in Cronobacter sakazakii (strain ATCC BAA-894) (Enterobacter sakazakii).